Reading from the N-terminus, the 32-residue chain is Potassium channel toxin alpha-KTx 9.4 (32 aa).

Intrachain disulfides connect Cys3–Cys19, Cys6–Cys24, and Cys10–Cys26.

In terms of tissue distribution, expressed by the venom gland.

The protein localises to the secreted. Blocker of human voltage-gated potassium channel Kv1.1/KCNA1. The protein is Potassium channel toxin alpha-KTx 9.4 of Hottentotta tamulus (Eastern Indian scorpion).